Here is an 81-residue protein sequence, read N- to C-terminus: Defensin-like protein 115 (81 aa).

Residues 1 to 24 (MAITKKMLVVFLLAFLFVTSSVHC) form the signal peptide. 4 cysteine pairs are disulfide-bonded: Cys40/Cys78, Cys46/Cys69, Cys54/Cys76, and Cys58/Cys77.

The protein belongs to the DEFL family.

Its subcellular location is the secreted. The sequence is that of Defensin-like protein 115 from Arabidopsis thaliana (Mouse-ear cress).